We begin with the raw amino-acid sequence, 381 residues long: cAMP-dependent protein kinase type I-beta regulatory subunit (381 aa).

A dimerization and phosphorylation region spans residues 1-136 (MASPSCFHSE…ALAKAISKNV (136 aa)). The residue at position 3 (Ser-3) is a Phosphoserine. Tyr-21 is modified (3'-nitrotyrosine). The tract at residues 66 to 88 (LARQKSNSQCDSHDEEISPTPPN) is disordered. A phosphoserine mark is found at Ser-77 and Ser-83. Thr-85 is modified (phosphothreonine). Residues 96-100 (RRGGV) carry the Pseudophosphorylation motif motif. Arg-97 is subject to Omega-N-methylarginine. Residues 137-254 (LFSH…SKVS), Glu-202, Arg-211, 255-381 (ILES…SLTV), Glu-326, and Arg-335 contribute to the 3',5'-cyclic AMP site.

Belongs to the cAMP-dependent kinase regulatory chain family. In terms of assembly, the inactive holoenzyme is composed of two regulatory chains and two catalytic chains. Activation by cAMP releases the two active catalytic monomers and the regulatory dimer. Interacts with PRKX; regulates this cAMP-dependent protein kinase. Interacts with smAKAP; this interaction may target PRKAR1B to the plasma membrane. The pseudophosphorylation site binds to the substrate-binding region of the catalytic chain, resulting in the inhibition of its activity. Four types of regulatory chains are found: I-alpha, I-beta, II-alpha, and II-beta. Their expression varies among tissues and is in some cases constitutive and in others inducible.

It is found in the cell membrane. Its function is as follows. Regulatory subunit of the cAMP-dependent protein kinases involved in cAMP signaling in cells. In Mus musculus (Mouse), this protein is cAMP-dependent protein kinase type I-beta regulatory subunit (Prkar1b).